The following is a 671-amino-acid chain: Probable potassium transport system protein Kup 2 (671 aa).

A run of 12 helical transmembrane segments spans residues 12–32, 56–76, 99–119, 139–159, 172–192, 218–238, 251–271, 296–316, 345–365, 374–394, 400–420, and 429–449; these read FAGL…SPLY, ISLI…MIAL, WLVI…TLTP, IPVP…VILF, AFGP…IANL, VGIL…ALYS, SWPY…AWIL, LFAI…LITG, IYIP…VFLF, AYGL…FEYL, PLYL…MFLI, and GGYV…VWFY.

This sequence belongs to the HAK/KUP transporter (TC 2.A.72) family.

The protein localises to the cell membrane. It carries out the reaction K(+)(in) + H(+)(in) = K(+)(out) + H(+)(out). Transport of potassium into the cell. Likely operates as a K(+):H(+) symporter. This chain is Probable potassium transport system protein Kup 2, found in Lactobacillus acidophilus (strain ATCC 700396 / NCK56 / N2 / NCFM).